Consider the following 72-residue polypeptide: DNA-directed RNA polymerase subunit omega (72 aa).

The protein belongs to the RNA polymerase subunit omega family. In terms of assembly, the RNAP catalytic core consists of 2 alpha, 1 beta, 1 beta' and 1 omega subunit. When a sigma factor is associated with the core the holoenzyme is formed, which can initiate transcription.

The enzyme catalyses RNA(n) + a ribonucleoside 5'-triphosphate = RNA(n+1) + diphosphate. Its function is as follows. Promotes RNA polymerase assembly. Latches the N- and C-terminal regions of the beta' subunit thereby facilitating its interaction with the beta and alpha subunits. The polypeptide is DNA-directed RNA polymerase subunit omega (Campylobacter lari (strain RM2100 / D67 / ATCC BAA-1060)).